The following is an 82-amino-acid chain: Ice-structuring protein B (82 aa).

The signal sequence occupies residues 1–23; that stretch reads MALSLFTVGQLIFLFWTMRITEA. Positions 24-44 are cleaved as a propeptide — removed by a dipeptidylpeptidase; it reads RPDPAAKAAPAAAAVPAAAAP. Arginine 81 carries the arginine amide modification.

This sequence belongs to the type-I AFP family. Post-translationally, amidated. Detected in liver (at protein level).

The protein resides in the secreted. Its subcellular location is the extracellular space. In terms of biological role, contributes to protect fish blood from freezing at subzero sea water temperatures. Lowers the blood freezing point. Binds to nascent ice crystals and prevents further growth. The polypeptide is Ice-structuring protein B (Pseudopleuronectes americanus (Winter flounder)).